Consider the following 160-residue polypeptide: Transcription elongation factor GreA (160 aa).

A coiled-coil region spans residues 1–72 (MAEKTYVMTL…QIQILETKIR (72 aa)).

This sequence belongs to the GreA/GreB family.

Functionally, necessary for efficient RNA polymerase transcription elongation past template-encoded arresting sites. The arresting sites in DNA have the property of trapping a certain fraction of elongating RNA polymerases that pass through, resulting in locked ternary complexes. Cleavage of the nascent transcript by cleavage factors such as GreA or GreB allows the resumption of elongation from the new 3'terminus. GreA releases sequences of 2 to 3 nucleotides. The sequence is that of Transcription elongation factor GreA from Streptococcus thermophilus (strain ATCC BAA-491 / LMD-9).